A 475-amino-acid polypeptide reads, in one-letter code: Tryptophan synthase beta chain 2, chloroplastic (475 aa).

Positions 1 to 21 (MATASTAATFRPSSVSASSEL) are enriched in polar residues. The tract at residues 1 to 44 (MATASTAATFRPSSVSASSELTHLRSPSKLPKFTPLPSARSRSS) is disordered. The N-terminal 51 residues, 1-51 (MATASTAATFRPSSVSASSELTHLRSPSKLPKFTPLPSARSRSSSSFSVSC), are a transit peptide targeting the chloroplast. Threonine 52 carries the N-acetylthreonine modification. Lysine 170 carries the N6-(pyridoxal phosphate)lysine modification.

This sequence belongs to the TrpB family. Tetramer of two alpha and two beta chains. The cofactor is pyridoxal 5'-phosphate.

Its subcellular location is the plastid. It localises to the chloroplast. It catalyses the reaction (1S,2R)-1-C-(indol-3-yl)glycerol 3-phosphate + L-serine = D-glyceraldehyde 3-phosphate + L-tryptophan + H2O. Its pathway is amino-acid biosynthesis; L-tryptophan biosynthesis; L-tryptophan from chorismate: step 5/5. In terms of biological role, the beta subunit is responsible for the synthesis of L-tryptophan from indole and L-serine. The protein is Tryptophan synthase beta chain 2, chloroplastic (TSB2) of Arabidopsis thaliana (Mouse-ear cress).